The sequence spans 326 residues: Acetyl-coenzyme A carboxylase carboxyl transferase subunit alpha (326 aa).

Positions 44–298 (KLETRAMQLR…KQALLDNLDE (255 aa)) constitute a CoA carboxyltransferase C-terminal domain.

Belongs to the AccA family. As to quaternary structure, acetyl-CoA carboxylase is a heterohexamer composed of biotin carboxyl carrier protein (AccB), biotin carboxylase (AccC) and two subunits each of ACCase subunit alpha (AccA) and ACCase subunit beta (AccD).

It is found in the cytoplasm. It carries out the reaction N(6)-carboxybiotinyl-L-lysyl-[protein] + acetyl-CoA = N(6)-biotinyl-L-lysyl-[protein] + malonyl-CoA. Its pathway is lipid metabolism; malonyl-CoA biosynthesis; malonyl-CoA from acetyl-CoA: step 1/1. Functionally, component of the acetyl coenzyme A carboxylase (ACC) complex. First, biotin carboxylase catalyzes the carboxylation of biotin on its carrier protein (BCCP) and then the CO(2) group is transferred by the carboxyltransferase to acetyl-CoA to form malonyl-CoA. The polypeptide is Acetyl-coenzyme A carboxylase carboxyl transferase subunit alpha (Trichormus variabilis (strain ATCC 29413 / PCC 7937) (Anabaena variabilis)).